The chain runs to 548 residues: Calcium-transporting ATPase (548 aa).

Positions 1–21 are cleaved as a signal peptide; it reads MNFKSTVITAMCCFFSFAVLA. Residues Asp-37 and Thr-78 each coordinate a divalent metal cation. Catalysis depends on Thr-78, which acts as the Phosphothreonine intermediate. Residues Asn-99 and 160–162 contribute to the substrate site; that span reads KDR. Positions 179 to 187 match the ATP-binding motif; the sequence is DGKTGDWIT. Residues Asp-305, His-309, Asp-352, His-353, and His-488 each contribute to the a divalent metal cation site.

Requires Mg(2+) as cofactor.

It localises to the cell inner membrane. It catalyses the reaction Ca(2+)(in) + ATP + H2O = Ca(2+)(out) + ADP + phosphate + H(+). Its activity is regulated as follows. Completely inhibited by vanadate(3-). Also inhibited by lanthanoid atom and phosphate. Not inhibited by N-ethylmaleimide, 1,3-dicyclohexylcarbodiimide, oligomycin, ouabain, valinomycin, nigericin, thapsigargin, cyclopiazonic acid or fluorescein isothiocyanate. Functionally, catalyzes the hydrolysis of ATP coupled with the transport of calcium. Has some hydrolysis activity also with dATP, GTP, UTP, ITP and 4-nitrophenyl phosphate as substrate. No activity with ADP, CTP, acetyl dihydrogen phosphate or AMP-PNP as substrate. In Myroides odoratus (Flavobacterium odoratum), this protein is Calcium-transporting ATPase.